Here is a 906-residue protein sequence, read N- to C-terminus: Toll-like receptor 12 (906 aa).

The first 21 residues, 1–21, serve as a signal peptide directing secretion; the sequence is MGRYWLLPGLLLSLPLVTGWS. The Extracellular segment spans residues 22-709; that stretch reads TSNCLVTEGS…DHCPQTLELK (688 aa). The N-linked (GlcNAc...) asparagine glycan is linked to Asn-59. LRR repeat units follow at residues 91–114, 115–140, 142–170, 198–222, 224–247, 267–290, 291–314, 316–338, 341–364, 366–388, 389–412, 414–436, 462–484, 485–508, and 510–533; these read FPGL…LRGL, GQLQ…AFSD, ISLQ…QWLG, SWTL…SLQG, QVEI…GLQK, HFEL…ALAS, CHSL…FLTA, PRLQ…MNET, VSGL…AFSC, PHLR…LFQE, LQQL…WLAA, PALT…GFWG, LTSL…PAIF, PSLE…NASG, and FPAL…GTSN. Asn-336 carries an N-linked (GlcNAc...) asparagine glycan. Asn-505 carries N-linked (GlcNAc...) asparagine glycosylation. A glycan (N-linked (GlcNAc...) asparagine) is linked at Asn-552. LRR repeat units follow at residues 562–586 and 591–614; these read LPSL…QLEE and LPQL…AFQR. A helical transmembrane segment spans residues 710 to 730; that stretch reads LFLASSALVFMLIALPLLQEA. The Cytoplasmic segment spans residues 731 to 906; the sequence is RNSWIPYLQA…FWTWLRSRLG (176 aa). Residues 759-905 enclose the TIR domain; that stretch reads FLFDVFVSHC…GFWTWLRSRL (147 aa).

It belongs to the Toll-like receptor family. In terms of assembly, binds MYD88 via their respective TIR domains. As to expression, macrophages, liver, kidney and bladder epithelial cells.

It localises to the membrane. Its function is as follows. Participates in the innate immune response to microbial agents. Acts via MYD88 and TRAF6, leading to NF-kappa-B activation, cytokine secretion and the inflammatory response. Plays a role in preventing infection of internal organs of the urogenital system. This chain is Toll-like receptor 12, found in Mus musculus (Mouse).